A 360-amino-acid polypeptide reads, in one-letter code: Phospho-N-acetylmuramoyl-pentapeptide-transferase (360 aa).

Transmembrane regions (helical) follow at residues 21–41 (YVTF…LWWG), 74–94 (MGGI…GDLG), 97–117 (YVWV…IDDY), 134–154 (YILQ…SADM), 168–188 (IMPQ…VGSS), 199–219 (GLAI…AYLS), 236–256 (AGEL…FLWF), 263–283 (VFMG…IAVL), 288–308 (ILLV…ILQV), and 338–358 (VIVR…ATLK).

Belongs to the glycosyltransferase 4 family. MraY subfamily. The cofactor is Mg(2+).

The protein localises to the cell inner membrane. The catalysed reaction is UDP-N-acetyl-alpha-D-muramoyl-L-alanyl-gamma-D-glutamyl-meso-2,6-diaminopimeloyl-D-alanyl-D-alanine + di-trans,octa-cis-undecaprenyl phosphate = di-trans,octa-cis-undecaprenyl diphospho-N-acetyl-alpha-D-muramoyl-L-alanyl-D-glutamyl-meso-2,6-diaminopimeloyl-D-alanyl-D-alanine + UMP. It functions in the pathway cell wall biogenesis; peptidoglycan biosynthesis. Its function is as follows. Catalyzes the initial step of the lipid cycle reactions in the biosynthesis of the cell wall peptidoglycan: transfers peptidoglycan precursor phospho-MurNAc-pentapeptide from UDP-MurNAc-pentapeptide onto the lipid carrier undecaprenyl phosphate, yielding undecaprenyl-pyrophosphoryl-MurNAc-pentapeptide, known as lipid I. The chain is Phospho-N-acetylmuramoyl-pentapeptide-transferase from Shewanella woodyi (strain ATCC 51908 / MS32).